We begin with the raw amino-acid sequence, 283 residues long: Syntaxin VAM3 (283 aa).

The interval 1-26 (MSFFDIEAQSSKGNSQQEPQFSTNQK) is disordered. Residues 1–261 (MSFFDIEAQS…ADQHQRDRNK (261 aa)) are Cytoplasmic-facing. Residues 8–25 (AQSSKGNSQQEPQFSTNQ) are compositionally biased toward polar residues. 2 coiled-coil regions span residues 28 to 48 (KELS…EKEC) and 84 to 111 (LIHQ…SYNQ). Disordered regions lie at residues 116–146 (FPLK…DPES) and 162–182 (NEGQ…QGLS). Residues 127 to 144 (SKERKDIHPRTEAVRQDP) show a composition bias toward basic and acidic residues. A coiled-coil region spans residues 169-189 (QLQEEQEQQQQGLSQEELDFQ). The t-SNARE coiled-coil homology domain maps to 190-252 (TIIHQERSQQ…QNANKQLTRA (63 aa)). The helical; Anchor for type IV membrane protein transmembrane segment at 262–282 (CGKVTLIIIIVVCMVVLLAVL) threads the bilayer. Residue Ser283 is a topological domain, vacuolar.

Belongs to the syntaxin family. In terms of assembly, associates with VAM7.

It localises to the vacuole membrane. Its function is as follows. Required for vacuolar assembly. Provides the t-SNARE function in a late step of the vacuolar assembly. Required for homotypic vacuole membrane fusion, autophagy and fusion of biosynthetic transport vesicles with the vacuole. Required for the delivery of alpha-factor receptor-ligand complexes to the vacuole. This Saccharomyces cerevisiae (strain ATCC 204508 / S288c) (Baker's yeast) protein is Syntaxin VAM3 (VAM3).